The chain runs to 342 residues: ATPase asna-1 (342 aa).

Residue 26-33 (KGGVGKTT) coordinates ATP. Asp55 is a catalytic residue. 2 residues coordinate ATP: Glu243 and Asn270. Zn(2+)-binding residues include Cys285 and Cys288.

This sequence belongs to the arsA ATPase family. In terms of assembly, homodimer.

The protein resides in the cytoplasm. It is found in the endoplasmic reticulum. ATPase required for the post-translational delivery of tail-anchored (TA) proteins to the endoplasmic reticulum. Recognizes and selectively binds the transmembrane domain of TA proteins in the cytosol. This complex then targets to the endoplasmic reticulum by membrane-bound receptors, where the tail-anchored protein is released for insertion. This process is regulated by ATP binding and hydrolysis. ATP binding drives the homodimer towards the closed dimer state, facilitating recognition of newly synthesized TA membrane proteins. ATP hydrolysis is required for insertion. Subsequently, the homodimer reverts towards the open dimer state, lowering its affinity for the membrane-bound receptor, and returning it to the cytosol to initiate a new round of targeting. May be involved in insulin signaling. The sequence is that of ATPase asna-1 from Caenorhabditis elegans.